A 460-amino-acid chain; its full sequence is Bifunctional protein GlmU (460 aa).

The interval 1 to 229 is pyrophosphorylase; sequence MTNYAIILAA…FNESLGVNDR (229 aa). Residues 8–11, Lys22, Gln72, and 77–78 contribute to the UDP-N-acetyl-alpha-D-glucosamine site; these read LAAG and GT. Position 102 (Asp102) interacts with Mg(2+). Gly139, Glu154, Asn169, and Asn227 together coordinate UDP-N-acetyl-alpha-D-glucosamine. Asn227 contributes to the Mg(2+) binding site. A linker region spans residues 230–250; the sequence is VALATAETVMRQRITQKHMVN. Residues 251-460 form an N-acetyltransferase region; the sequence is GVTFQNPETV…RLAHHPSRSK (210 aa). Positions 332 and 350 each coordinate UDP-N-acetyl-alpha-D-glucosamine. The Proton acceptor role is filled by His362. Positions 365 and 376 each coordinate UDP-N-acetyl-alpha-D-glucosamine. Residues Ala379, 385 to 386, Ser404, Ala422, and Arg439 contribute to the acetyl-CoA site; that span reads NY.

It in the N-terminal section; belongs to the N-acetylglucosamine-1-phosphate uridyltransferase family. This sequence in the C-terminal section; belongs to the transferase hexapeptide repeat family. In terms of assembly, homotrimer. It depends on Mg(2+) as a cofactor.

The protein localises to the cytoplasm. It catalyses the reaction alpha-D-glucosamine 1-phosphate + acetyl-CoA = N-acetyl-alpha-D-glucosamine 1-phosphate + CoA + H(+). The catalysed reaction is N-acetyl-alpha-D-glucosamine 1-phosphate + UTP + H(+) = UDP-N-acetyl-alpha-D-glucosamine + diphosphate. It participates in nucleotide-sugar biosynthesis; UDP-N-acetyl-alpha-D-glucosamine biosynthesis; N-acetyl-alpha-D-glucosamine 1-phosphate from alpha-D-glucosamine 6-phosphate (route II): step 2/2. The protein operates within nucleotide-sugar biosynthesis; UDP-N-acetyl-alpha-D-glucosamine biosynthesis; UDP-N-acetyl-alpha-D-glucosamine from N-acetyl-alpha-D-glucosamine 1-phosphate: step 1/1. It functions in the pathway bacterial outer membrane biogenesis; LPS lipid A biosynthesis. In terms of biological role, catalyzes the last two sequential reactions in the de novo biosynthetic pathway for UDP-N-acetylglucosamine (UDP-GlcNAc). The C-terminal domain catalyzes the transfer of acetyl group from acetyl coenzyme A to glucosamine-1-phosphate (GlcN-1-P) to produce N-acetylglucosamine-1-phosphate (GlcNAc-1-P), which is converted into UDP-GlcNAc by the transfer of uridine 5-monophosphate (from uridine 5-triphosphate), a reaction catalyzed by the N-terminal domain. This chain is Bifunctional protein GlmU, found in Streptococcus pyogenes serotype M5 (strain Manfredo).